A 2909-amino-acid polypeptide reads, in one-letter code: Micronemal protein 15 (2909 aa).

Positions 1–29 are cleaved as a signal peptide; it reads MVFRATREPFRLPLVAAFIALFLLKGVTC. 11 N-linked (GlcNAc...) asparagine glycosylation sites follow: Asn512, Asn563, Asn792, Asn813, Asn986, Asn1007, Asn1057, Asn1142, Asn1319, Asn1395, and Asn1713. Residues 1755–1811 enclose the TSP type-1 1 domain; the sequence is TAIVGEWGEWSACTGTCFSQWWTPKRTRTRLVLAELSHSQIPSVSETATCLDLPPCG. The interval 1937–2073 is disordered; it reads RRKGIMSRRR…RSQARNQTPD (137 aa). Residues 1967-1977 are compositionally biased toward polar residues; the sequence is SEQSGKASQNG. N-linked (GlcNAc...) asparagine glycosylation is present at Asn1976. The segment covering 1978–1988 has biased composition (basic residues); it reads SRRHRASRKQK. Residues 2004–2016 are compositionally biased toward polar residues; that stretch reads GESTLHGTGTNAY. Residues 2049–2065 show a composition bias toward basic residues; the sequence is KARRARRGAGRFRKSRS. An N-linked (GlcNAc...) asparagine glycan is attached at Asn2333. Positions 2484–2549 constitute a TSP type-1 2 domain; sequence TCDYTEWSEW…EKCDWMPVCP (66 aa). Intrachain disulfides connect Cys2485/Cys2528, Cys2496/Cys2500, and Cys2542/Cys2548. Positions 2552-2587 are disordered; that stretch reads EGEEEDDATGGVEPRGEPIVPPWSPERPTDENNQAM. Asn2706 carries N-linked (GlcNAc...) asparagine glycosylation. Residues 2709–2729 form a helical membrane-spanning segment; that stretch reads TWVICLLLGVGGGICFVLSCV. Residues Asn2751, Asn2768, and Asn2793 are each glycosylated (N-linked (GlcNAc...) asparagine). The tract at residues 2759 to 2846 is disordered; that stretch reads ESHKLRRQGN…IGQTSPTQQR (88 aa). The span at 2801 to 2815 shows a compositional bias: acidic residues; the sequence is PEEEPWQFEDRDEEP. Residues 2837–2846 are compositionally biased toward polar residues; the sequence is IGQTSPTQQR.

Component of a complex, at least composed of cysteine repeat modular protein A (CRMPa), cysteine repeat modular protein B (CRMPb), micronemal protein 15 (MIC15) and thrombospondin type 1 domain-containing protein (TSP1).

It is found in the membrane. Its function is as follows. Required for rhoptry secretion. Plays a role in host cell invasion. This Toxoplasma gondii protein is Micronemal protein 15.